Consider the following 264-residue polypeptide: 3-methyl-2-oxobutanoate hydroxymethyltransferase (264 aa).

2 residues coordinate Mg(2+): Asp45 and Asp84. 3-methyl-2-oxobutanoate-binding positions include 45–46 (DS), Asp84, and Lys112. Glu114 provides a ligand contact to Mg(2+). The active-site Proton acceptor is the Glu181.

The protein belongs to the PanB family. As to quaternary structure, homodecamer; pentamer of dimers. Mg(2+) serves as cofactor.

It localises to the cytoplasm. The catalysed reaction is 3-methyl-2-oxobutanoate + (6R)-5,10-methylene-5,6,7,8-tetrahydrofolate + H2O = 2-dehydropantoate + (6S)-5,6,7,8-tetrahydrofolate. It functions in the pathway cofactor biosynthesis; (R)-pantothenate biosynthesis; (R)-pantoate from 3-methyl-2-oxobutanoate: step 1/2. Catalyzes the reversible reaction in which hydroxymethyl group from 5,10-methylenetetrahydrofolate is transferred onto alpha-ketoisovalerate to form ketopantoate. This is 3-methyl-2-oxobutanoate hydroxymethyltransferase from Shewanella loihica (strain ATCC BAA-1088 / PV-4).